The chain runs to 1462 residues: Copper-transporting ATPase 2 (1462 aa).

A disordered region spans residues 1-23 (MDPRKNLASVGTMPEQERQVTAK). Residues 1–655 (MDPRKNLASV…KTEIKQWKKS (655 aa)) are Cytoplasmic-facing. 4 consecutive HMA domains span residues 68–134 (ATDV…FEAS), 153–219 (AVVK…FEAA), 267–333 (ATLP…PGHF), and 361–427 (RTAV…FEVS). Cu(+) is bound by residues Cys79, Cys82, Cys164, Cys167, Cys278, and Cys281. The tract at residues 333–361 (FKVSLPDGVEENEPQSGSSQRHQEQGPGR) is disordered. Residue Cys372 participates in Cu(+) binding. The interval 460-487 (KMAPDTRGLPTHQGPGHSSETPSSPGAT) is disordered. Polar residues predominate over residues 475–487 (GHSSETPSSPGAT). Ser478 and Ser483 each carry phosphoserine. HMA domains follow at residues 490–556 (QKCF…FEAS) and 566–632 (GDIE…FHAS). Cys501, Cys504, Cys577, and Cys580 together coordinate Cu(+). Residues 656–677 (FLCSLVFGIPVMGLMVYMLIPS) traverse the membrane as a helical segment. Over 678 to 699 (STPQETMVLDHNIIPGLSVLNL) the chain is Extracellular. Residues 700-719 (IFFILCTFVQFLGGWYFYVQ) traverse the membrane as a helical segment. Residues 720-726 (AYKSLRH) are Cytoplasmic-facing. The chain crosses the membrane as a helical span at residues 727–747 (RSANMDVLIVLATTIAYAYSL). Topologically, residues 748-766 (VILVVAVAEKAEKSPVTFF) are extracellular. Residues 767 to 787 (DTPPMLFVFIALGRWLEHVAK) traverse the membrane as a helical segment. At 788 to 921 (SKTSEALAKL…KAPIQQLADR (134 aa)) the chain is on the cytoplasmic side. The chain crosses the membrane as a helical span at residues 922-944 (FSGYFVPFIIIISTLTLVVWIVI). The Extracellular portion of the chain corresponds to 945-974 (GFVDFGVVQKYFPSPSKHISQTEVIIRFAF). Residues 975 to 996 (QTSITVLCIACPCSLGLATPTA) traverse the membrane as a helical segment. Over 997-1319 (VMVGTGVAAQ…LSKRTVRRIR (323 aa)) the chain is Cytoplasmic. The active-site 4-aspartylphosphate intermediate is the Asp1029. The Mg(2+) site is built by Asp1264 and Asp1268. A helical membrane pass occupies residues 1320–1337 (VNLVLALIYNMVGIPIAA). Residues 1338 to 1348 (GVFMPIGIVLQ) lie on the Extracellular side of the membrane. The helical transmembrane segment at 1349 to 1368 (PWMGSAAMAASSVSVVLSSL) threads the bilayer. At 1369 to 1462 (QLKCYRKPDL…LSDRDEEQCI (94 aa)) the chain is on the cytoplasmic side. A phosphoserine mark is found at Ser1395 and Ser1454.

The protein belongs to the cation transport ATPase (P-type) (TC 3.A.3) family. Type IB subfamily. Monomer. Interacts with COMMD1/MURR1. Interacts with DCTN4, in a copper-dependent manner. Interacts with ATOX1. Interacts (via C-terminus) with ZBTB16/PLZF. As to expression, detected in liver and kidney.

It is found in the golgi apparatus. It localises to the trans-Golgi network membrane. Its subcellular location is the late endosome. It catalyses the reaction Cu(+)(in) + ATP + H2O = Cu(+)(out) + ADP + phosphate + H(+). In terms of biological role, copper ion transmembrane transporter involved in the export of copper out of the cells, such as the efflux of hepatic copper into the bile. This chain is Copper-transporting ATPase 2 (Atp7b), found in Mus musculus (Mouse).